The sequence spans 80 residues: RNA-binding protein Hfq (80 aa).

Residues 9–69 (DVFLNQVRKE…VSTISPNSPV (61 aa)) enclose the Sm domain.

The protein belongs to the Hfq family. Homohexamer.

In terms of biological role, RNA chaperone that binds small regulatory RNA (sRNAs) and mRNAs to facilitate mRNA translational regulation in response to envelope stress, environmental stress and changes in metabolite concentrations. Also binds with high specificity to tRNAs. The chain is RNA-binding protein Hfq from Alkaliphilus oremlandii (strain OhILAs) (Clostridium oremlandii (strain OhILAs)).